The chain runs to 253 residues: UPF0174 protein jhp_1494 (253 aa).

It belongs to the UPF0174 family.

The polypeptide is UPF0174 protein jhp_1494 (Helicobacter pylori (strain J99 / ATCC 700824) (Campylobacter pylori J99)).